The sequence spans 589 residues: Kelch-like protein 25 (589 aa).

The 69-residue stretch at 46–114 folds into the BTB domain; the sequence is TDVTLWAGDR…AYSSRIVINE (69 aa). Residues 149–250 enclose the BACK domain; that stretch reads CLGMMVLSDA…LPSDCLKNAV (102 aa). 6 Kelch repeats span residues 296–340, 341–388, 389–444, 446–492, 493–538, and 539–585; these read TLLI…AIGC, KVYV…ELEN, CLYV…SAKL, LFVF…VLGS, QIFI…ASGN, and KLYV…STWK.

Component of the BCR(KLHL25) E3 ubiquitin ligase complex, at least composed of CUL3, KLHL25 and RBX1.

The protein operates within protein modification; protein ubiquitination. Substrate-specific adapter of a BCR (BTB-CUL3-RBX1) E3 ubiquitin ligase complex involved in various processes, such as translation homeostasis and lipid synthesis. The BCR(KLHL25) ubiquitin ligase complex acts by mediating ubiquitination of hypophosphorylated EIF4EBP1 (4E-BP1): ubiquitination and subsequent degradation of hypophosphorylated EIF4EBP1 (4E-BP1) probably serves as a homeostatic mechanism to maintain translation and prevent eIF4E inhibition when eIF4E levels are low. The BCR(KLHL25) complex does not target EIF4EBP1 (4E-BP1) when it is hyperphosphorylated or associated with eIF4E. The BCR(KLHL25) complex also acts as a regulator of lipid synthesis by mediating ubiquitination and degradation of ACLY, thereby inhibiting lipid synthesis. BCR(KLHL25)-mediated degradation of ACLY promotes fatty acid oxidation and is required for differentiation of inducible regulatory T (iTreg) cells. This Mus musculus (Mouse) protein is Kelch-like protein 25.